A 577-amino-acid chain; its full sequence is MVQSAPASEIAALILRGFDDYREQFREITDGARARFEQAQWQEAQRASAQRINLYEEKVAETVAGLRAGLADSELLDVERWPIIKSAYIAQIDLRLDDELAETWFNSIFCGLFSHDNISDGTMFVHTTRPSLRAHARAPYTRTYRPGGDLRQALEKIFDDYRFDVPYDDRERDLERIDALLHSNLPDWVCKDPDLAIELIGSVFYRNKGAYLVGRLFTPDEQWPLVFPLLHREDHGIQFDTVITDEAEVSIIFSFTRSYFMVDVPVPAELVAFLKRLLPGKHLAELYTSIGFYKQGKSEFYRALINHLATTDDRFVMAPGVRGMVMSVFTLPGFNTVFKIIKDRFNPSKSVDHATVIQKYQLVKNHDRVGRLADTQQFADFRFPVSKFEPECLAELLEVAPSTVVMEGDVVLIRHCWTERRMTPLNIYLENASEAQTREALNDYGLAIKQLAAANIFPGDMLLKNFGVTRHGRVVFYDYDEICYLTEVNFRYIPEPRFPEDEMSSEPWYSVGPNDVFPEEFPRFLFVDLNQRRLFAKLHGNLYDAKYWQGLQEQIREGKVIDVFPYRRQETPEQLLG.

ATP-binding positions include 318-324 and K339; that span reads APGVRGM. D374 is an active-site residue.

It belongs to the AceK family.

Its subcellular location is the cytoplasm. The enzyme catalyses L-seryl-[isocitrate dehydrogenase] + ATP = O-phospho-L-seryl-[isocitrate dehydrogenase] + ADP + H(+). Bifunctional enzyme which can phosphorylate or dephosphorylate isocitrate dehydrogenase (IDH) on a specific serine residue. This is a regulatory mechanism which enables bacteria to bypass the Krebs cycle via the glyoxylate shunt in response to the source of carbon. When bacteria are grown on glucose, IDH is fully active and unphosphorylated, but when grown on acetate or ethanol, the activity of IDH declines drastically concomitant with its phosphorylation. The sequence is that of Isocitrate dehydrogenase kinase/phosphatase from Pseudomonas aeruginosa (strain ATCC 15692 / DSM 22644 / CIP 104116 / JCM 14847 / LMG 12228 / 1C / PRS 101 / PAO1).